The primary structure comprises 500 residues: Cytochrome P450 81F1 (500 aa).

Residues 1 to 21 (MLYFILLPLLFLVISYKFLYS) traverse the membrane as a helical segment. Lys-248 is covalently cross-linked (Glycyl lysine isopeptide (Lys-Gly) (interchain with G-Cter in ubiquitin)). Cys-438 lines the heme pocket.

It belongs to the cytochrome P450 family. The cofactor is heme.

Its subcellular location is the membrane. Its pathway is secondary metabolite biosynthesis. Functionally, involved in indole glucosinolate biosynthesis. Catalyzes hydroxylation reactions of the glucosinolate indole ring. Converts indol-3-yl-methylglucosinolate (I3M) to 4-hydroxy-indol-3-yl-methylglucosinolate (4OH-I3M) and/or 1-hydroxy-indol-3-yl-methylglucosinolate (1OH-I3M) intermediates. These hydroxy intermediates are converted to 4-methoxy-indol-3-yl-methylglucosinolate (4MO-I3M) and 1-methoxy-indol-3-yl-methylglucosinolate (1MO-I3M) by indole glucosinolate methyltransferase 1 and 2 (IGMT1 and IGMT2). The protein is Cytochrome P450 81F1 of Arabidopsis thaliana (Mouse-ear cress).